The primary structure comprises 1142 residues: Protein kinase C-like (1142 aa).

An REM-1 1 domain is found at 1–67 (MNDEDKVHDI…LRELQMRRLG (67 aa)). Residues 70 to 139 (VDNMSLGASP…PPDSNVPRAR (70 aa)) form a disordered region. An REM-1 2 domain is found at 149 to 226 (KFDTPHLGPR…LKRYEELHID (78 aa)). A C2 domain is found at 231–349 (GPDDDSINLP…LRRKKIEAEM (119 aa)). Residues 357 to 403 (ADRVGSRAPPPQFPMGAQSPQFAAPPTSPGSQEQNTMIPPQAPPPSQ) are disordered. Polar residues predominate over residues 385-394 (PGSQEQNTMI). Phorbol-ester/DAG-type zinc fingers lie at residues 457-505 (GHKF…VTKC) and 525-576 (PHRF…PDFC). Disordered regions lie at residues 592–622 (TQKKTHKDKASSMSERTLRPGSKTSISSGSI) and 651–807 (SQTT…TDPG). The span at 613–622 (SKTSISSGSI) shows a compositional bias: polar residues. 3 stretches are compositionally biased toward low complexity: residues 663-677 (TSTSSTTASAAAAAA), 712-724 (SAQQQQGYGSPQQ), and 741-765 (PQARPQQQQQQQQQTPQQVSPMYQQ). Residues 817–1076 (FNFLAVLGKG…AQEIMSQPFF (260 aa)) form the Protein kinase domain. Residues 823 to 831 (LGKGNFGKV) and Lys846 each bind ATP. Asp942 acts as the Proton acceptor in catalysis. The AGC-kinase C-terminal domain occupies 1077–1142 (RNINWDDIYH…RGFSYTADFE (66 aa)).

This sequence belongs to the protein kinase superfamily. AGC Ser/Thr protein kinase family. PKC subfamily.

The enzyme catalyses L-seryl-[protein] + ATP = O-phospho-L-seryl-[protein] + ADP + H(+). The catalysed reaction is L-threonyl-[protein] + ATP = O-phospho-L-threonyl-[protein] + ADP + H(+). The protein is Protein kinase C-like of Neurospora crassa (strain ATCC 24698 / 74-OR23-1A / CBS 708.71 / DSM 1257 / FGSC 987).